The chain runs to 701 residues: Elongation factor G (701 aa).

In terms of domain architecture, tr-type G spans 11-287 (NKVRNIGIMA…AVVDYLPSPL (277 aa)). Residues 20–27 (AHIDAGKT), 84–88 (DTPGH), and 138–141 (NKMD) each bind GTP.

It belongs to the TRAFAC class translation factor GTPase superfamily. Classic translation factor GTPase family. EF-G/EF-2 subfamily.

It is found in the cytoplasm. Catalyzes the GTP-dependent ribosomal translocation step during translation elongation. During this step, the ribosome changes from the pre-translocational (PRE) to the post-translocational (POST) state as the newly formed A-site-bound peptidyl-tRNA and P-site-bound deacylated tRNA move to the P and E sites, respectively. Catalyzes the coordinated movement of the two tRNA molecules, the mRNA and conformational changes in the ribosome. In Mycobacterium sp. (strain JLS), this protein is Elongation factor G.